The primary structure comprises 257 residues: Hydroxyethylthiazole kinase (257 aa).

Residue Met-49 participates in substrate binding. Positions 124 and 170 each coordinate ATP. Residue Gly-197 coordinates substrate.

It belongs to the Thz kinase family. It depends on Mg(2+) as a cofactor.

The enzyme catalyses 5-(2-hydroxyethyl)-4-methylthiazole + ATP = 4-methyl-5-(2-phosphooxyethyl)-thiazole + ADP + H(+). It functions in the pathway cofactor biosynthesis; thiamine diphosphate biosynthesis; 4-methyl-5-(2-phosphoethyl)-thiazole from 5-(2-hydroxyethyl)-4-methylthiazole: step 1/1. Catalyzes the phosphorylation of the hydroxyl group of 4-methyl-5-beta-hydroxyethylthiazole (THZ). The polypeptide is Hydroxyethylthiazole kinase (Klebsiella pneumoniae (strain 342)).